Consider the following 61-residue polypeptide: UPF0391 membrane protein Ajs_0703 (61 aa).

Transmembrane regions (helical) follow at residues 5–25 and 33–53; these read AIIF…GVAA and VLFV…LLGI.

The protein belongs to the UPF0391 family.

Its subcellular location is the cell membrane. In Acidovorax sp. (strain JS42), this protein is UPF0391 membrane protein Ajs_0703.